The sequence spans 540 residues: Eukaryotic translation initiation factor 3 subunit L (540 aa).

A PCI domain is found at 307–515; the sequence is TFSDILLYIQ…IHIADTKVSH (209 aa).

The protein belongs to the eIF-3 subunit L family. As to quaternary structure, component of the eukaryotic translation initiation factor 3 (eIF-3) complex. The eIF-3 complex interacts with pix.

It is found in the cytoplasm. In terms of biological role, component of the eukaryotic translation initiation factor 3 (eIF-3) complex, which is involved in protein synthesis of a specialized repertoire of mRNAs and, together with other initiation factors, stimulates binding of mRNA and methionyl-tRNAi to the 40S ribosome. The eIF-3 complex specifically targets and initiates translation of a subset of mRNAs involved in cell proliferation. This is Eukaryotic translation initiation factor 3 subunit L from Drosophila grimshawi (Hawaiian fruit fly).